The primary structure comprises 462 residues: UDP-N-acetylmuramate--L-alanine ligase (462 aa).

ATP is bound at residue 119–125 (GTHGKTT).

Belongs to the MurCDEF family.

It localises to the cytoplasm. The catalysed reaction is UDP-N-acetyl-alpha-D-muramate + L-alanine + ATP = UDP-N-acetyl-alpha-D-muramoyl-L-alanine + ADP + phosphate + H(+). It participates in cell wall biogenesis; peptidoglycan biosynthesis. Its function is as follows. Cell wall formation. This chain is UDP-N-acetylmuramate--L-alanine ligase, found in Parabacteroides distasonis (strain ATCC 8503 / DSM 20701 / CIP 104284 / JCM 5825 / NCTC 11152).